The sequence spans 379 residues: L-lactate dehydrogenase (379 aa).

Positions M1–P379 constitute an FMN hydroxy acid dehydrogenase domain. Residue Y24 participates in substrate binding. FMN contacts are provided by S106 and Q127. A substrate-binding site is contributed by Y129. T155 lines the FMN pocket. R164 provides a ligand contact to substrate. K251 serves as a coordination point for FMN. The Proton acceptor role is filled by H275. R278 is a substrate binding site. D306–R330 contacts FMN.

It belongs to the FMN-dependent alpha-hydroxy acid dehydrogenase family. FMN serves as cofactor.

The protein resides in the cell inner membrane. It catalyses the reaction (S)-lactate + A = pyruvate + AH2. Catalyzes the conversion of L-lactate to pyruvate. Is coupled to the respiratory chain. The protein is L-lactate dehydrogenase of Stenotrophomonas maltophilia (strain R551-3).